Consider the following 621-residue polypeptide: Methionine--tRNA ligase (621 aa).

A 'HIGH' region motif is present at residues 11-21; it reads PYANGPRHIGH. Zn(2+) is bound by residues C143, C146, C156, and C159. Positions 347–351 match the 'KMSKS' region motif; sequence KFSSS. S350 contacts ATP.

Belongs to the class-I aminoacyl-tRNA synthetase family. MetG type 1 subfamily. As to quaternary structure, monomer. It depends on Zn(2+) as a cofactor.

It localises to the cytoplasm. The catalysed reaction is tRNA(Met) + L-methionine + ATP = L-methionyl-tRNA(Met) + AMP + diphosphate. Functionally, is required not only for elongation of protein synthesis but also for the initiation of all mRNA translation through initiator tRNA(fMet) aminoacylation. The chain is Methionine--tRNA ligase from Bifidobacterium longum (strain NCC 2705).